The chain runs to 436 residues: Magnesium transporter MRS2-B (436 aa).

2 stretches are compositionally biased toward low complexity: residues 1-14 and 29-54; these read MSAAAASSAAGDSA and VASVSSPSLPSAPPGALAGGRRFPGG. Positions 1–60 are disordered; sequence MSAAAASSAAGDSAKQPLLHHQRGNPPHVASVSSPSLPSAPPGALAGGRRFPGGLDVPNL. The stretch at 176–242 forms a coiled coil; it reads LALEAACSFL…RDEIEQLMDD (67 aa). 2 helical membrane passes run 372–392 and 408–428; these read LLLTTATFVVAIFGVVAGIFG and WVLIITGVIGAFIFCGFLWFF. The Required for magnesium transport activity signature appears at 392–394; the sequence is GMN.

It belongs to the CorA metal ion transporter (MIT) (TC 1.A.35.5) family.

The protein resides in the membrane. Functionally, magnesium transporter that may mediate the influx of magnesium. The polypeptide is Magnesium transporter MRS2-B (MRS2-B) (Oryza sativa subsp. indica (Rice)).